The sequence spans 749 residues: Catalase-peroxidase 2 (749 aa).

A signal peptide spans 1–27; it reads MFKRTIPLFAAFTLAISPSVFPNYAYA. The segment at residues 107 to 229 is a cross-link (tryptophyl-tyrosyl-methioninium (Trp-Tyr) (with M-255)); that stretch reads WHAAGTYRIY…LAATVMGLIY (123 aa). The active-site Proton acceptor is His-108. The segment at residues 229–255 is a cross-link (tryptophyl-tyrosyl-methioninium (Tyr-Met) (with W-107)); that stretch reads YVNPEGPNGVPDPLAAAEKIRETFGRM. His-270 is a heme b binding site.

The protein belongs to the peroxidase family. Peroxidase/catalase subfamily. Homodimer or homotetramer. The cofactor is heme b. Formation of the three residue Trp-Tyr-Met cross-link is important for the catalase, but not the peroxidase activity of the enzyme.

The enzyme catalyses H2O2 + AH2 = A + 2 H2O. It carries out the reaction 2 H2O2 = O2 + 2 H2O. Its function is as follows. Bifunctional enzyme with both catalase and broad-spectrum peroxidase activity. The protein is Catalase-peroxidase 2 of Legionella pneumophila (strain Paris).